Here is a 336-residue protein sequence, read N- to C-terminus: Serpentine receptor class alpha-10 (336 aa).

Residues 1–28 are Extracellular-facing; the sequence is MGPITANSSKCATEDQMILQTSLLLRIN. A helical transmembrane segment spans residues 29–49; sequence VIIMTIVAIITFILTYKALFI. The Cytoplasmic portion of the chain corresponds to 50–61; sequence LKIRPIFHSSTK. Residues 62-82 traverse the membrane as a helical segment; it reads ILLYTSLLFVNVHAVIFMVIQ. The Extracellular portion of the chain corresponds to 83–107; sequence NTALIRSFTLSDKPCEIMRTTLECR. A helical membrane pass occupies residues 108 to 128; sequence FQNHVLIFGIAGVNFNQFGLT. Residues 129-148 are Cytoplasmic-facing; the sequence is VDRLLATIIPQSYSHMGALP. Residues 149–169 form a helical membrane-spanning segment; it reads GVILSVLVVACSIAAPLIIAI. Over 170–192 the chain is Extracellular; that stretch reads GDPYDDIVPNCFFFPEHSAPRAN. The chain crosses the membrane as a helical span at residues 193-213; that stretch reads IFLVTLSTLVITSIFLNFIII. Residues 214–243 are Cytoplasmic-facing; the sequence is YANKKLEKGCRTRFYVTQRYQKREALISTR. Residues 244 to 264 form a helical membrane-spanning segment; it reads IISYIAASQFLGLTLYSTMVL. Residues 265–280 are Extracellular-facing; that stretch reads TLRLHKSMIPISIYHN. A helical transmembrane segment spans residues 281 to 301; it reads MVWWAYTVPFAAVSLPALLIY. The Cytoplasmic portion of the chain corresponds to 302-336; the sequence is RINQVGSNRKRVINRITAKVETQEEHMKSLKELWA.

This sequence belongs to the nematode receptor-like protein sra family. As to expression, expressed in the URX sensory neuron, the ALA interneuron and in additional interneurons, pharyngeal neurons and muscle.

The protein resides in the membrane. This chain is Serpentine receptor class alpha-10 (sra-10), found in Caenorhabditis elegans.